Reading from the N-terminus, the 262-residue chain is Tryptophan synthase alpha chain (262 aa).

Catalysis depends on proton acceptor residues E48 and D59.

Belongs to the TrpA family. In terms of assembly, tetramer of two alpha and two beta chains.

The enzyme catalyses (1S,2R)-1-C-(indol-3-yl)glycerol 3-phosphate + L-serine = D-glyceraldehyde 3-phosphate + L-tryptophan + H2O. The protein operates within amino-acid biosynthesis; L-tryptophan biosynthesis; L-tryptophan from chorismate: step 5/5. In terms of biological role, the alpha subunit is responsible for the aldol cleavage of indoleglycerol phosphate to indole and glyceraldehyde 3-phosphate. This chain is Tryptophan synthase alpha chain, found in Helicobacter pylori (strain G27).